Reading from the N-terminus, the 350-residue chain is S-adenosylmethionine:tRNA ribosyltransferase-isomerase (350 aa).

The protein belongs to the QueA family. As to quaternary structure, monomer.

It localises to the cytoplasm. It catalyses the reaction 7-aminomethyl-7-carbaguanosine(34) in tRNA + S-adenosyl-L-methionine = epoxyqueuosine(34) in tRNA + adenine + L-methionine + 2 H(+). Its pathway is tRNA modification; tRNA-queuosine biosynthesis. In terms of biological role, transfers and isomerizes the ribose moiety from AdoMet to the 7-aminomethyl group of 7-deazaguanine (preQ1-tRNA) to give epoxyqueuosine (oQ-tRNA). This chain is S-adenosylmethionine:tRNA ribosyltransferase-isomerase, found in Bacillus cereus (strain Q1).